The primary structure comprises 470 residues: Sugar transporter ERD6-like 8 (470 aa).

Residues 1–16 (METRKDDMEKRNDKSE) show a composition bias toward basic and acidic residues. The tract at residues 1–24 (METRKDDMEKRNDKSEPLLLPENG) is disordered. Helical transmembrane passes span 33-53 (WMVYLSTIIAVCGSYEFGTCV), 73-93 (QFSVFGSILNMGAVLGAITSG), 110-130 (VISAIGWLIIYLAKGDVPLDF), 133-153 (FLTGYGCGTLSFVVPVFIAEI), 164-184 (TLNQLFIVIGLASMFLIGAVV), 188-208 (TLALTGVAPCVVLFFGTWFIP), 270-290 (FVIVGVGLMFFQQFVGINGVI), 307-327 (GSILYSIEQVVLTALGATLLI), 335-355 (LLMASAVGMLIGCLLIGNSFL), 373-393 (GVLVYIGSFSIGMGAIPWVIM), 409-429 (VTVVNWLSSWLVSFTFNFLMI), and 434-454 (GTFYVYGGVCVLAIIFIAKLV).

It belongs to the major facilitator superfamily. Sugar transporter (TC 2.A.1.1) family.

The protein localises to the membrane. In terms of biological role, sugar transporter. The polypeptide is Sugar transporter ERD6-like 8 (Arabidopsis thaliana (Mouse-ear cress)).